A 1415-amino-acid chain; its full sequence is DNA-directed RNA polymerase subunit beta' (1415 aa).

Zn(2+)-binding residues include cysteine 214, cysteine 294, cysteine 301, and cysteine 304. Residues 1335–1351 (QNFVDSQGKPQSQSSFI) are compositionally biased toward polar residues. The tract at residues 1335–1390 (QNFVDSQGKPQSQSSFIDDSMSEFSPVKDKSGSVLDDSDFPPGNFDSDFPADNYDL) is disordered.

This sequence belongs to the RNA polymerase beta' chain family. RpoC2 subfamily. In cyanobacteria the RNAP catalytic core is composed of 2 alpha, 1 beta, 1 beta', 1 gamma and 1 omega subunit. When a sigma factor is associated with the core the holoenzyme is formed, which can initiate transcription. It depends on Zn(2+) as a cofactor.

It carries out the reaction RNA(n) + a ribonucleoside 5'-triphosphate = RNA(n+1) + diphosphate. In terms of biological role, DNA-dependent RNA polymerase catalyzes the transcription of DNA into RNA using the four ribonucleoside triphosphates as substrates. The sequence is that of DNA-directed RNA polymerase subunit beta' from Trichodesmium erythraeum (strain IMS101).